The sequence spans 145 residues: Globin (145 aa).

The residue at position 2 (Ser-2) is an N-acetylserine. The 144-residue stretch at 2 to 145 (SLSAAEADLV…IVAALKAAGK (144 aa)) folds into the Globin domain. His-96 contributes to the heme b binding site.

This sequence belongs to the globin family. As to quaternary structure, monomer.

In Aplysia kurodai (Kuroda's sea hare), this protein is Globin.